The chain runs to 719 residues: Disintegrin and metalloproteinase domain-containing protein 18 (719 aa).

An N-terminal signal peptide occupies residues 1–19 (MPLLFILAELAMLFARLDS). Residues 20 to 179 (EGICLHITVP…QDKNHSQLLP (160 aa)) constitute a propeptide that is removed on maturation. Residues N61, N75, N121, N152, N173, N244, and N331 are each glycosylated (N-linked (GlcNAc...) asparagine). Over 173-683 (NHSQLLPQSL…TKRLSKNEDS (511 aa)) the chain is Extracellular. The Peptidase M12B domain maps to 180–378 (QSLKLHIIVG…FDTQCLGDLS (199 aa)). Cystine bridges form between C289-C373, C332-C357, and C334-C339. N-linked (GlcNAc...) asparagine glycans are attached at residues N356 and N405. The 90-residue stretch at 387 to 476 (QAVCGNGIME…HCVPDTFALN (90 aa)) folds into the Disintegrin domain. A disulfide bond links C447 and C468. N-linked (GlcNAc...) asparagine glycans are attached at residues N607, N614, and N621. In terms of domain architecture, EGF-like spans 616–650 (TGNDCNATKKCKGNGICNNFGNCQCFPDYRPPDCN). 3 disulfide bridges follow: C620–C632, C626–C638, and C640–C649. A helical transmembrane segment spans residues 684-704 (WVILGFFIFLPFIVTFLVGIM). Residues 705–719 (KRNERKIVPQGEHKI) are Cytoplasmic-facing.

Post-translationally, the prodomain and the metalloprotease-like domain are cleaved during the epididymal maturation of the spermatozoa. Expressed specifically in testis.

The protein localises to the membrane. Functionally, sperm surface membrane protein that may be involved in spermatogenesis and fertilization. This is a non catalytic metalloprotease-like protein. The protein is Disintegrin and metalloproteinase domain-containing protein 18 (Adam18) of Mus musculus (Mouse).